The primary structure comprises 66 residues: Antimicrobial peptide Eval967 (66 aa).

The N-terminal stretch at 1–22 (MKFSALLPVFFLLLAVIDYCQA) is a signal peptide. Position 36 is a leucine amide (Leu-36). Residues 37–66 (GKRDVKTQKYVDIKRRDLDLDDMLSKLFED) constitute a propeptide that is removed on maturation.

The protein belongs to the non-disulfide-bridged peptide (NDBP) superfamily. Short antimicrobial peptide (group 4) family. As to expression, expressed by the venom gland.

The protein localises to the secreted. Probable antimicrobial peptide. Has no inhibitory activity against herpes simplex virus type 1 (HSV-1). The chain is Antimicrobial peptide Eval967 from Euscorpiops validus (Scorpion).